Reading from the N-terminus, the 234-residue chain is Enolase-phosphatase E1 (234 aa).

The segment at 212–234 (RPGNYPQPQHSHFKISSFEGLNP) is disordered.

It belongs to the HAD-like hydrolase superfamily. MasA/MtnC family. As to quaternary structure, monomer. It depends on Mg(2+) as a cofactor.

It catalyses the reaction 5-methylsulfanyl-2,3-dioxopentyl phosphate + H2O = 1,2-dihydroxy-5-(methylsulfanyl)pent-1-en-3-one + phosphate. It participates in amino-acid biosynthesis; L-methionine biosynthesis via salvage pathway; L-methionine from S-methyl-5-thio-alpha-D-ribose 1-phosphate: step 3/6. The protein operates within amino-acid biosynthesis; L-methionine biosynthesis via salvage pathway; L-methionine from S-methyl-5-thio-alpha-D-ribose 1-phosphate: step 4/6. Functionally, bifunctional enzyme that catalyzes the enolization of 2,3-diketo-5-methylthiopentyl-1-phosphate (DK-MTP-1-P) into the intermediate 2-hydroxy-3-keto-5-methylthiopentenyl-1-phosphate (HK-MTPenyl-1-P), which is then dephosphorylated to form the acireductone 1,2-dihydroxy-3-keto-5-methylthiopentene (DHK-MTPene). The protein is Enolase-phosphatase E1 of Leptospira interrogans serogroup Icterohaemorrhagiae serovar copenhageni (strain Fiocruz L1-130).